The primary structure comprises 638 residues: DNA gyrase subunit B (638 aa).

In terms of domain architecture, Toprim spans 422–536 (SELYIVEGDS…NGYVYIAQPP (115 aa)). E428, D501, and D503 together coordinate Mg(2+).

The protein belongs to the type II topoisomerase GyrB family. As to quaternary structure, heterotetramer, composed of two GyrA and two GyrB chains. In the heterotetramer, GyrA contains the active site tyrosine that forms a transient covalent intermediate with DNA, while GyrB binds cofactors and catalyzes ATP hydrolysis. Mg(2+) serves as cofactor. Mn(2+) is required as a cofactor. The cofactor is Ca(2+).

Its subcellular location is the cytoplasm. It catalyses the reaction ATP-dependent breakage, passage and rejoining of double-stranded DNA.. A type II topoisomerase that negatively supercoils closed circular double-stranded (ds) DNA in an ATP-dependent manner to modulate DNA topology and maintain chromosomes in an underwound state. Negative supercoiling favors strand separation, and DNA replication, transcription, recombination and repair, all of which involve strand separation. Also able to catalyze the interconversion of other topological isomers of dsDNA rings, including catenanes and knotted rings. Type II topoisomerases break and join 2 DNA strands simultaneously in an ATP-dependent manner. The sequence is that of DNA gyrase subunit B from Bacillus subtilis (strain 168).